A 695-amino-acid chain; its full sequence is Biosynthetic arginine decarboxylase 1 (695 aa).

Lys-141 carries the N6-(pyridoxal phosphate)lysine modification. Residue 332–342 participates in substrate binding; the sequence is LDVGGGLGVDY.

Belongs to the Orn/Lys/Arg decarboxylase class-II family. SpeA subfamily. Mg(2+) serves as cofactor. It depends on pyridoxal 5'-phosphate as a cofactor.

It catalyses the reaction L-arginine + H(+) = agmatine + CO2. In terms of biological role, catalyzes the biosynthesis of agmatine from arginine. This chain is Biosynthetic arginine decarboxylase 1 (speA1), found in Synechocystis sp. (strain ATCC 27184 / PCC 6803 / Kazusa).